Here is a 126-residue protein sequence, read N- to C-terminus: Nascent polypeptide-associated complex protein (126 aa).

An NAC-A/B domain is found at 10 to 77; the sequence is PRMMKQMQKM…AKKVAKEEEK (68 aa).

Belongs to the NAC-alpha family. Homodimer. Interacts with the ribosome. Binds ribosomal RNA.

Functionally, contacts the emerging nascent chain on the ribosome. This is Nascent polypeptide-associated complex protein from Methanococcus maripaludis (strain DSM 14266 / JCM 13030 / NBRC 101832 / S2 / LL).